The chain runs to 430 residues: Adenylosuccinate synthetase (430 aa).

Residues 13-19 (GDEGKGK) and 41-43 (GHT) each bind GTP. Asp14 acts as the Proton acceptor in catalysis. Mg(2+) is bound by residues Asp14 and Gly41. Residues 14–17 (DEGK), 39–42 (NAGH), Thr130, Arg144, Gln225, Thr240, and Arg304 contribute to the IMP site. His42 (proton donor) is an active-site residue. Substrate is bound at residue 300 to 306 (STTGRAR). GTP is bound by residues Arg306, 332-334 (KLD), and 414-416 (STG).

Belongs to the adenylosuccinate synthetase family. Homodimer. Requires Mg(2+) as cofactor.

It is found in the cytoplasm. It carries out the reaction IMP + L-aspartate + GTP = N(6)-(1,2-dicarboxyethyl)-AMP + GDP + phosphate + 2 H(+). It participates in purine metabolism; AMP biosynthesis via de novo pathway; AMP from IMP: step 1/2. Its function is as follows. Plays an important role in the de novo pathway of purine nucleotide biosynthesis. Catalyzes the first committed step in the biosynthesis of AMP from IMP. The protein is Adenylosuccinate synthetase of Pseudomonas putida (strain W619).